The primary structure comprises 369 residues: Chaperone protein DnaJ (369 aa).

In terms of domain architecture, J spans 7–73; sequence DYYEILGVPR…QKRAMYDRFG (67 aa). The CR-type zinc finger occupies 143–225; sequence GAEIPVEYER…CGGSGRVLRK (83 aa). Zn(2+) is bound by residues Cys156, Cys159, Cys173, Cys176, Cys199, Cys202, Cys213, and Cys216. CXXCXGXG motif repeat units lie at residues 156 to 163, 173 to 180, 199 to 206, and 213 to 220; these read CPRCGGTG, CPSCGGTG, CERCGGTG, and CHECGGSG.

This sequence belongs to the DnaJ family. Homodimer. Zn(2+) is required as a cofactor.

It localises to the cytoplasm. Participates actively in the response to hyperosmotic and heat shock by preventing the aggregation of stress-denatured proteins and by disaggregating proteins, also in an autonomous, DnaK-independent fashion. Unfolded proteins bind initially to DnaJ; upon interaction with the DnaJ-bound protein, DnaK hydrolyzes its bound ATP, resulting in the formation of a stable complex. GrpE releases ADP from DnaK; ATP binding to DnaK triggers the release of the substrate protein, thus completing the reaction cycle. Several rounds of ATP-dependent interactions between DnaJ, DnaK and GrpE are required for fully efficient folding. Also involved, together with DnaK and GrpE, in the DNA replication of plasmids through activation of initiation proteins. In Thermotoga maritima (strain ATCC 43589 / DSM 3109 / JCM 10099 / NBRC 100826 / MSB8), this protein is Chaperone protein DnaJ.